The primary structure comprises 122 residues: Large ribosomal subunit protein uL14 (122 aa).

Belongs to the universal ribosomal protein uL14 family. Part of the 50S ribosomal subunit. Forms a cluster with proteins L3 and L19. In the 70S ribosome, L14 and L19 interact and together make contacts with the 16S rRNA in bridges B5 and B8.

In terms of biological role, binds to 23S rRNA. Forms part of two intersubunit bridges in the 70S ribosome. The sequence is that of Large ribosomal subunit protein uL14 from Bifidobacterium adolescentis (strain ATCC 15703 / DSM 20083 / NCTC 11814 / E194a).